The chain runs to 90 residues: Small ribosomal subunit protein uS15 (90 aa).

The protein belongs to the universal ribosomal protein uS15 family. Part of the 30S ribosomal subunit. Forms a bridge to the 50S subunit in the 70S ribosome, contacting the 23S rRNA.

Its function is as follows. One of the primary rRNA binding proteins, it binds directly to 16S rRNA where it helps nucleate assembly of the platform of the 30S subunit by binding and bridging several RNA helices of the 16S rRNA. Forms an intersubunit bridge (bridge B4) with the 23S rRNA of the 50S subunit in the ribosome. This Helicobacter pylori (strain HPAG1) protein is Small ribosomal subunit protein uS15.